The chain runs to 220 residues: Metalloproteinase inhibitor 2 (220 aa).

The N-terminal stretch at 1 to 26 (MGAAARSLRLALGLLLLATLLRPADA) is a signal peptide. Position 27 (cysteine 27) interacts with Zn(2+). Involved in metalloproteinase-binding stretches follow at residues 27–30 (CSCS) and 95–96 (SA). Cystine bridges form between cysteine 27–cysteine 98, cysteine 29–cysteine 127, cysteine 39–cysteine 152, cysteine 154–cysteine 201, cysteine 159–cysteine 164, and cysteine 172–cysteine 193. The NTR domain occupies 27–152 (CSCSPVHPQQ…SLNHRYQMGC (126 aa)).

The protein belongs to the protease inhibitor I35 (TIMP) family. As to quaternary structure, interacts (via the C-terminal) with MMP2 (via the C-terminal PEX domain); the interaction inhibits the MMP2 activity. The activity of TIMP2 is dependent on the presence of disulfide bonds.

It localises to the secreted. Functionally, complexes with metalloproteinases (such as collagenases) and irreversibly inactivates them by binding to their catalytic zinc cofactor. The chain is Metalloproteinase inhibitor 2 (Timp2) from Rattus norvegicus (Rat).